The chain runs to 293 residues: Calcium uniporter protein 2, mitochondrial (293 aa).

The transit peptide at 1-33 (MWSVMGLVRRTAMSSTVNKASPVRSLLGGFRCL) directs the protein to the mitochondrion. A helical membrane pass occupies residues 168–188 (ILWGGLGYSVVQIGIFVRLTF). The Selectivity filter motif lies at 193–201 (WDVMEPITF). Glu197 contacts Ca(2+). The helical transmembrane segment at 198-218 (PITFFTTATGIIVGYAYFLMT) threads the bilayer.

The protein belongs to the MCU (TC 1.A.77) family.

Its subcellular location is the mitochondrion inner membrane. It catalyses the reaction Ca(2+)(in) = Ca(2+)(out). Its function is as follows. Mitochondrial inner membrane calcium uniporter that mediates calcium uptake into mitochondria. Constitutes a pore-forming and calcium-conducting subunit. Mitochondrial calcium homeostasis plays key roles in cellular physiology and regulates cell bioenergetics, cytoplasmic calcium signals and activation of cell death pathways. This chain is Calcium uniporter protein 2, mitochondrial, found in Arabidopsis thaliana (Mouse-ear cress).